The chain runs to 83 residues: Apolipoprotein C-I, acidic form (83 aa).

A signal peptide spans 1-26; sequence MRLFLSLPVLVVVLSMVLEGPAPAQG.

Belongs to the apolipoprotein C1 family.

The protein resides in the secreted. The protein is Apolipoprotein C-I, acidic form (APOC1A) of Pan troglodytes (Chimpanzee).